We begin with the raw amino-acid sequence, 413 residues long: Serine/threonine transporter SstT (413 aa).

Transmembrane regions (helical) follow at residues 15-35 (NIVI…TLAP), 48-68 (FVSA…AASI), 82-102 (VIVL…VMSF), 141-161 (ALMT…GLGL), 178-198 (CISA…FGLV), 216-236 (LLAV…PLIV), 290-310 (IPLG…VLTL), 330-350 (LVAA…LLLI), and 357-377 (FGIS…IGVV).

This sequence belongs to the dicarboxylate/amino acid:cation symporter (DAACS) (TC 2.A.23) family.

It is found in the cell inner membrane. It catalyses the reaction L-serine(in) + Na(+)(in) = L-serine(out) + Na(+)(out). The catalysed reaction is L-threonine(in) + Na(+)(in) = L-threonine(out) + Na(+)(out). Functionally, involved in the import of serine and threonine into the cell, with the concomitant import of sodium (symport system). This chain is Serine/threonine transporter SstT, found in Aliivibrio fischeri (strain ATCC 700601 / ES114) (Vibrio fischeri).